We begin with the raw amino-acid sequence, 563 residues long: Rab escort protein 1 (563 aa).

The segment at 538-563 (ELFKEETSPAENTTEEENDGGVEIED) is disordered. A compositionally biased stretch (acidic residues) spans 550 to 563 (TTEEENDGGVEIED).

Belongs to the Rab GDI family. In terms of assembly, heterotrimer composed of the alpha subunit RGTA, the beta subunit RGTB and REP; within this trimer, RGTA and RGTB form the catalytic component, while REP mediates peptide substrate binding. In terms of tissue distribution, expressed in roots, leaves and flowers.

The protein resides in the cytoplasm. In terms of biological role, substrate-binding subunit of the Rab geranylgeranyltransferase (GGTase) complex. Binds unprenylated Rab proteins and presents the substrate peptide to the catalytic component composed of the alpha subunit RGTA and the beta subunit RGTB. Preferentially binds the GDP-bound form of Rab and stimulates geranylgeranylation of various Rab GTPases in vitro. The sequence is that of Rab escort protein 1 from Arabidopsis thaliana (Mouse-ear cress).